A 218-amino-acid polypeptide reads, in one-letter code: Lactosylceramide 4-alpha-galactosyltransferase (218 aa).

The DXD motif signature appears at 57–59; it reads DTD.

Belongs to the glycosyltransferase 32 family.

The protein resides in the golgi apparatus membrane. It catalyses the reaction a beta-D-Gal-(1-&gt;4)-beta-D-Glc-(1&lt;-&gt;1)-Cer(d18:1(4E)) + UDP-alpha-D-galactose = a globoside Gb3Cer (d18:1(4E)) + UDP + H(+). It carries out the reaction a beta-D-Gal-(1&lt;-&gt;1')-ceramide + UDP-alpha-D-galactose = alpha-D-Gal-(1-&gt;4)-beta-D-Gal-(1&lt;-&gt;1')-Cer + UDP + H(+). Its pathway is glycolipid biosynthesis. In terms of biological role, catalyzes the transfer of galactose from UDP-alpha-D-galactose to lactosylceramide/beta-D-galactosyl-(1-&gt;4)-beta-D-glucosyl-(1&lt;-&gt;1)-ceramide(d18:1(4E)) to produce globotriaosylceramide/globoside Gb3Cer (d18:1(4E)). Also able to transfer galactose to galactosylceramide/beta-D-Gal-(1&lt;-&gt;1')-Cer. Globoside Gb3Cer is a glycosphingolipid of the globo serie, one of the major types of neutral root structures of glycosphingolipids, that constitute a significant portion of mammalian cell membranes. This Pongo pygmaeus (Bornean orangutan) protein is Lactosylceramide 4-alpha-galactosyltransferase (A4GALT).